The sequence spans 87 residues: Histone H1.C6/H1.C9 (87 aa).

Positions 1 to 87 are disordered; it reads MSDAAVPPKK…KKAVKKAPKK (87 aa). The span at 11–87 shows a compositional bias: basic residues; it reads ASPKKASPKK…KKAVKKAPKK (77 aa).

Its subcellular location is the nucleus. It localises to the chromosome. The polypeptide is Histone H1.C6/H1.C9 (Trypanosoma cruzi).